A 40-amino-acid chain; its full sequence is Photosystem II reaction center protein J (40 aa).

The helical transmembrane segment at 8-28 (IPLWIIGTVTGIIVIGLIGIF) threads the bilayer.

It belongs to the PsbJ family. As to quaternary structure, PSII is composed of 1 copy each of membrane proteins PsbA, PsbB, PsbC, PsbD, PsbE, PsbF, PsbH, PsbI, PsbJ, PsbK, PsbL, PsbM, PsbT, PsbX, PsbY, PsbZ, Psb30/Ycf12, at least 3 peripheral proteins of the oxygen-evolving complex and a large number of cofactors. It forms dimeric complexes.

It localises to the plastid. The protein localises to the chloroplast thylakoid membrane. One of the components of the core complex of photosystem II (PSII). PSII is a light-driven water:plastoquinone oxidoreductase that uses light energy to abstract electrons from H(2)O, generating O(2) and a proton gradient subsequently used for ATP formation. It consists of a core antenna complex that captures photons, and an electron transfer chain that converts photonic excitation into a charge separation. This is Photosystem II reaction center protein J from Morus indica (Mulberry).